The chain runs to 396 residues: Phosphopentomutase (396 aa).

Mn(2+)-binding residues include aspartate 13, aspartate 288, histidine 293, aspartate 329, histidine 330, and histidine 341.

It belongs to the phosphopentomutase family. It depends on Mn(2+) as a cofactor.

The protein localises to the cytoplasm. It carries out the reaction 2-deoxy-alpha-D-ribose 1-phosphate = 2-deoxy-D-ribose 5-phosphate. It catalyses the reaction alpha-D-ribose 1-phosphate = D-ribose 5-phosphate. It participates in carbohydrate degradation; 2-deoxy-D-ribose 1-phosphate degradation; D-glyceraldehyde 3-phosphate and acetaldehyde from 2-deoxy-alpha-D-ribose 1-phosphate: step 1/2. Its function is as follows. Isomerase that catalyzes the conversion of deoxy-ribose 1-phosphate (dRib-1-P) and ribose 1-phosphate (Rib-1-P) to deoxy-ribose 5-phosphate (dRib-5-P) and ribose 5-phosphate (Rib-5-P), respectively. The protein is Phosphopentomutase of Clostridium beijerinckii (strain ATCC 51743 / NCIMB 8052) (Clostridium acetobutylicum).